The sequence spans 72 residues: Bradykinin-potentiating peptide BmKbpp (72 aa).

An N-terminal signal peptide occupies residues 1 to 22 (MNKKTLLVIFFVTMLIVDEVNS). The propeptide occupies 70-72 (RRR).

Belongs to the non-disulfide-bridged peptide (NDBP) superfamily. Long chain multifunctional peptide (group 2) family. Expressed by the venom gland.

It is found in the secreted. Amphipathic peptide that shows bradykinin potentiating activity and antimicrobial activities against bacteria and fungi. Has higher antibacterial activities against Gram-negative than against Gram-positive bacteria. Also inhibits NADPH oxidase-dependent superoxide production (IC(50) is 0.4 uM on granulocytes stimulated with PMA, IC(50) is 0.51 uM on HL-60 cells undifferentiated and IC(50) is 0.53 uM on HL-60 cells treated with DMSO). The C-terminal peptide shows a higher bradykinin potentiating activity than the complete peptide. The chain is Bradykinin-potentiating peptide BmKbpp from Olivierus martensii (Manchurian scorpion).